The sequence spans 100 residues: MKLTPREKDKLLIFTAALLAERRRARGLKLNYPEAVAFITAALMEAARDGRTVAEVMHYGTTLLTRDDVMDGVPEMIPDIQVEATFPDGTKLVTVHHPIP.

This sequence belongs to the urease gamma subunit family. Heterotrimer of UreA (gamma), UreB (beta) and UreC (alpha) subunits. Three heterotrimers associate to form the active enzyme.

It is found in the cytoplasm. It carries out the reaction urea + 2 H2O + H(+) = hydrogencarbonate + 2 NH4(+). The protein operates within nitrogen metabolism; urea degradation; CO(2) and NH(3) from urea (urease route): step 1/1. This Burkholderia cenocepacia (strain ATCC BAA-245 / DSM 16553 / LMG 16656 / NCTC 13227 / J2315 / CF5610) (Burkholderia cepacia (strain J2315)) protein is Urease subunit gamma.